A 278-amino-acid polypeptide reads, in one-letter code: HTH-type transcriptional activator RhaS (278 aa).

The HTH araC/xylS-type domain maps to 174–272; that stretch reads NLLLAWLEDH…NWSPRDIRQG (99 aa). 2 consecutive DNA-binding regions (H-T-H motif) follow at residues 191–212 and 239–262; these read DAVADQFSLSLRTLHRQLKQQT and VTDIAYRCGFSDSNHFSTLFRREF.

As to quaternary structure, binds DNA as a dimer.

It localises to the cytoplasm. Functionally, activates expression of the rhaBAD and rhaT operons. This Shigella flexneri serotype 5b (strain 8401) protein is HTH-type transcriptional activator RhaS.